Reading from the N-terminus, the 268-residue chain is Phosphatidylglycerol--prolipoprotein diacylglyceryl transferase (268 aa).

7 consecutive transmembrane segments (helical) span residues P27–L47, L66–Y86, G104–W124, F130–I150, P181–F201, V208–T228, and F242–L262. R149 contacts a 1,2-diacyl-sn-glycero-3-phospho-(1'-sn-glycerol).

The protein belongs to the Lgt family.

Its subcellular location is the cell inner membrane. The enzyme catalyses L-cysteinyl-[prolipoprotein] + a 1,2-diacyl-sn-glycero-3-phospho-(1'-sn-glycerol) = an S-1,2-diacyl-sn-glyceryl-L-cysteinyl-[prolipoprotein] + sn-glycerol 1-phosphate + H(+). It participates in protein modification; lipoprotein biosynthesis (diacylglyceryl transfer). In terms of biological role, catalyzes the transfer of the diacylglyceryl group from phosphatidylglycerol to the sulfhydryl group of the N-terminal cysteine of a prolipoprotein, the first step in the formation of mature lipoproteins. The chain is Phosphatidylglycerol--prolipoprotein diacylglyceryl transferase from Shewanella sp. (strain MR-4).